We begin with the raw amino-acid sequence, 407 residues long: Carbamoyl phosphate synthase small chain (407 aa).

The segment at 1–203 (MSQNESGTIA…EPCGEYEGKE (203 aa)) is CPSase. Positions 61, 255, and 257 each coordinate L-glutamine. The region spanning 207–405 (TVAAVDLGIK…CELMKNNSKE (199 aa)) is the Glutamine amidotransferase type-1 domain. Cys-283 acts as the Nucleophile in catalysis. Residues Phe-284, Gln-287, Asn-325, Gly-327, and Phe-328 each coordinate L-glutamine. Active-site residues include His-378 and Glu-380.

The protein belongs to the CarA family. In terms of assembly, composed of two chains; the small (or glutamine) chain promotes the hydrolysis of glutamine to ammonia, which is used by the large (or ammonia) chain to synthesize carbamoyl phosphate. Tetramer of heterodimers (alpha,beta)4.

The enzyme catalyses hydrogencarbonate + L-glutamine + 2 ATP + H2O = carbamoyl phosphate + L-glutamate + 2 ADP + phosphate + 2 H(+). The catalysed reaction is L-glutamine + H2O = L-glutamate + NH4(+). It participates in amino-acid biosynthesis; L-arginine biosynthesis; carbamoyl phosphate from bicarbonate: step 1/1. The protein operates within pyrimidine metabolism; UMP biosynthesis via de novo pathway; (S)-dihydroorotate from bicarbonate: step 1/3. Small subunit of the glutamine-dependent carbamoyl phosphate synthetase (CPSase). CPSase catalyzes the formation of carbamoyl phosphate from the ammonia moiety of glutamine, carbonate, and phosphate donated by ATP, constituting the first step of 2 biosynthetic pathways, one leading to arginine and/or urea and the other to pyrimidine nucleotides. The small subunit (glutamine amidotransferase) binds and cleaves glutamine to supply the large subunit with the substrate ammonia. This Bifidobacterium longum (strain DJO10A) protein is Carbamoyl phosphate synthase small chain.